The sequence spans 227 residues: ATP synthase subunit a (227 aa).

Transmembrane regions (helical) follow at residues 16–36 (AFVY…VAYI), 79–99 (LVAT…IPGF), 105–125 (SLNL…FEGI), 176–196 (LFLL…AFAL), and 202–222 (VLQT…AVAI).

The protein belongs to the ATPase A chain family. As to quaternary structure, F-type ATPases have 2 components, CF(1) - the catalytic core - and CF(0) - the membrane proton channel. CF(1) has five subunits: alpha(3), beta(3), gamma(1), delta(1), epsilon(1). CF(0) has three main subunits: a(1), b(2) and c(9-12). The alpha and beta chains form an alternating ring which encloses part of the gamma chain. CF(1) is attached to CF(0) by a central stalk formed by the gamma and epsilon chains, while a peripheral stalk is formed by the delta and b chains.

It localises to the cell inner membrane. Key component of the proton channel; it plays a direct role in the translocation of protons across the membrane. The protein is ATP synthase subunit a of Campylobacter concisus (strain 13826).